A 447-amino-acid chain; its full sequence is Protein odr-4 homolog (447 aa).

Transmembrane regions (helical) follow at residues 82–102 (MLPG…ELAD) and 425–445 (IGVI…FHYF).

Belongs to the ODR-4 family. In terms of tissue distribution, ubiquitously expressed.

The protein resides in the membrane. In terms of biological role, may play a role in the trafficking of a subset of G-protein coupled receptors. In Mus musculus (Mouse), this protein is Protein odr-4 homolog (Odr4).